A 387-amino-acid polypeptide reads, in one-letter code: 1-hydroxy-2-naphthoate 1,2-dioxygenasee (387 aa).

Cupin type-2 domains lie at Phe-103–Asp-171 and Val-271–Phe-337.

In terms of assembly, homohexamer. Requires Fe(2+) as cofactor.

The catalysed reaction is 1-hydroxy-2-naphthoate + O2 = (3Z)-4-(2-carboxyphenyl)-2-oxobut-3-enoate + H(+). Dioxygenase involved in phenanthrene catabolism by mediating cleavage of 1-hydroxy-2-naphthoate. This Nocardioides sp. (strain KP7) protein is 1-hydroxy-2-naphthoate 1,2-dioxygenasee (phdI).